The following is a 441-amino-acid chain: tRNA(Ile)-lysidine synthase (441 aa).

27 to 32 (SGGVDS) is an ATP binding site.

It belongs to the tRNA(Ile)-lysidine synthase family.

Its subcellular location is the cytoplasm. The enzyme catalyses cytidine(34) in tRNA(Ile2) + L-lysine + ATP = lysidine(34) in tRNA(Ile2) + AMP + diphosphate + H(+). Functionally, ligates lysine onto the cytidine present at position 34 of the AUA codon-specific tRNA(Ile) that contains the anticodon CAU, in an ATP-dependent manner. Cytidine is converted to lysidine, thus changing the amino acid specificity of the tRNA from methionine to isoleucine. In Proteus mirabilis (strain HI4320), this protein is tRNA(Ile)-lysidine synthase.